A 418-amino-acid chain; its full sequence is Deubiquitinase and deneddylase Dub1 (418 aa).

Over residues 1 to 11 (MLSPTNSTSKT) the composition is skewed to polar residues. The disordered stretch occupies residues 1–23 (MLSPTNSTSKTAPVPPQDSSKPV). Residues 40–60 (TALVVLLVVVTLGLILLFYSF) traverse the membrane as a helical segment. Residues 72-145 (TRPSTKEQPT…LPPKAPKPVK (74 aa)) form a disordered region. Residues 86–141 (VPLPSPPLAVPRPSTPPPPVISRPSMPPAPTPAISPPSTPSAPKPSTPPPLPPKAP) are compositionally biased toward pro residues. Catalysis depends on residues H288, D305, and C358.

Belongs to the peptidase C48 family.

Its subcellular location is the secreted. It is found in the host cell. The protein resides in the membrane. Its function is as follows. Effector proteins function to alter host cell physiology and promote bacterial survival in host tissues. This protease possesses deubiquitinating and deneddylating activities. This Chlamydia trachomatis serovar E (strain Sweden2) protein is Deubiquitinase and deneddylase Dub1 (cdu1).